A 463-amino-acid polypeptide reads, in one-letter code: RuvB-like 2 (463 aa).

An ATP-binding site is contributed by 77–84 (GQPGTGKT).

It belongs to the RuvB family. Forms homohexameric rings. Can form a dodecamer with ruvbl1 made of two stacked hexameric rings. Component of the chromatin-remodeling Ino80 complex. Component of some MLL1/MLL complex.

The protein localises to the nucleus. The protein resides in the dynein axonemal particle. The enzyme catalyses ATP + H2O = ADP + phosphate + H(+). Has double-stranded DNA-stimulated ATPase activity. Has ATP-dependent DNA helicase (5' to 3') activity suggesting a role in nuclear processes such as recombination and transcription. Represses gene activation mediated by beta-catenin. Proposed core component of the chromatin remodeling Ino80 complex which exhibits DNA- and nucleosome-activated ATPase activity and catalyzes ATP-dependent nucleosome sliding. Involved in the endoplasmic reticulum (ER)-associated degradation (ERAD) pathway where it negatively regulates expression of ER stress response genes. May act as a regulator of embryonic heart growth. The polypeptide is RuvB-like 2 (ruvbl2) (Danio rerio (Zebrafish)).